Consider the following 222-residue polypeptide: Eukaryotic translation initiation factor 3 subunit K (222 aa).

The PCI domain maps to 46-208 (YDLEANLAVL…KIKTKNITEK (163 aa)).

This sequence belongs to the eIF-3 subunit K family. As to quaternary structure, component of the eukaryotic translation initiation factor 3 (eIF-3) complex. The eIF-3 complex interacts with pix.

It localises to the cytoplasm. In terms of biological role, component of the eukaryotic translation initiation factor 3 (eIF-3) complex, which is involved in protein synthesis of a specialized repertoire of mRNAs and, together with other initiation factors, stimulates binding of mRNA and methionyl-tRNAi to the 40S ribosome. The eIF-3 complex specifically targets and initiates translation of a subset of mRNAs involved in cell proliferation. In Drosophila erecta (Fruit fly), this protein is Eukaryotic translation initiation factor 3 subunit K.